A 106-amino-acid chain; its full sequence is Large ribosomal subunit protein P1 (106 aa).

Positions 69-106 are disordered; the sequence is AAAAAPAEEAKEEAKEEEEEEEEVKEEEAIEGLGALFG. Over residues 83 to 98 the composition is skewed to acidic residues; that stretch reads KEEEEEEEEVKEEEAI.

Belongs to the eukaryotic ribosomal protein P1/P2 family. Part of the 50S ribosomal subunit. Homodimer, it forms part of the ribosomal stalk which helps the ribosome interact with GTP-bound translation factors. Forms a heptameric uL10/P0(P1)2(P1)2(P1)2 complex, where uL10/P0 forms an elongated spine to which the P1 dimers bind in a sequential fashion.

Its function is as follows. Forms part of the ribosomal stalk, playing a central role in the interaction of the ribosome with GTP-bound translation factors. This chain is Large ribosomal subunit protein P1, found in Archaeoglobus fulgidus (strain ATCC 49558 / DSM 4304 / JCM 9628 / NBRC 100126 / VC-16).